We begin with the raw amino-acid sequence, 223 residues long: MAKVFRSGSTDLRLFENLSFQVMKGEMVAIVGDSGSGKSSLLHILGALDRPSDGDVYFAELRLAKLSEAAAAEFRNRELGFVWQFHYLLPEFTALENIAMPLLVRGLGRREAETEARHWLNEVGLLDRGHHRPGELSGGEQQRVALARALVTRPKVLMADEPTGDLDNRTAETVFNLIARLHRDYQLTSLIVTHNLAFARRCDRVIRLAAGVVDEVEPQSLPA.

Positions 1-223 (MAKVFRSGST…DEVEPQSLPA (223 aa)) constitute an ABC transporter domain. 32–39 (GDSGSGKS) serves as a coordination point for ATP.

It belongs to the ABC transporter superfamily. Lipoprotein translocase (TC 3.A.1.125) family. In terms of assembly, the complex is composed of two ATP-binding proteins (LolD) and two transmembrane proteins (LolC and LolE).

It localises to the cell inner membrane. Functionally, part of the ABC transporter complex LolCDE involved in the translocation of mature outer membrane-directed lipoproteins, from the inner membrane to the periplasmic chaperone, LolA. Responsible for the formation of the LolA-lipoprotein complex in an ATP-dependent manner. The polypeptide is Lipoprotein-releasing system ATP-binding protein LolD (Koribacter versatilis (strain Ellin345)).